Reading from the N-terminus, the 950-residue chain is Protocadherin alpha-13 (950 aa).

A signal peptide spans 1–29 (MLSSWQGGPRPRQLLLWLLILAAWETGSG). Over 30–697 (QLHYSVPEEA…GPEAALVDVN (668 aa)) the chain is Extracellular. 6 Cadherin domains span residues 34-133 (SVPE…PPIF), 134-242 (PESK…APEF), 243-350 (YQSV…APEV), 351-455 (TITS…APAF), 456-565 (AQPE…APAL), and 581-678 (MPRS…APQA). N-linked (GlcNAc...) asparagine glycans are attached at residues Asn257 and Asn265. N-linked (GlcNAc...) asparagine glycosylation occurs at Asn548. The chain crosses the membrane as a helical span at residues 698-718 (VYLIIAICAVSSLLVLTLLLY). Topologically, residues 719-950 (TALRCSAPPT…GNSTTDNSDQ (232 aa)) are cytoplasmic. PXXP repeat units follow at residues 734–737 (PGKP), 774–777 (PSLP), 799–802 (PRQP), 832–835 (PGGP), 873–876 (PGNP), and 891–894 (PGSP). Residues 734–894 (PGKPTLVCSS…PDKFIIPGSP (161 aa)) form a 6 X 4 AA repeats of P-X-X-P region. Disordered regions lie at residues 780-806 (LGSA…NPDW) and 829-950 (RAGP…NSDQ). Over residues 787-800 (GQREEDSECLKEPR) the composition is skewed to basic and acidic residues. Positions 909–923 (DKSDFITFGKKEETK) are enriched in basic and acidic residues.

The protein localises to the cell membrane. Functionally, potential calcium-dependent cell-adhesion protein. May be involved in the establishment and maintenance of specific neuronal connections in the brain. This is Protocadherin alpha-13 (PCDHA13) from Homo sapiens (Human).